We begin with the raw amino-acid sequence, 544 residues long: Chaperonin GroEL (544 aa).

ATP-binding positions include 29–32 (TLGP), 86–90 (DGTTT), Gly413, 476–478 (NAL), and Asp492.

This sequence belongs to the chaperonin (HSP60) family. Forms a cylinder of 14 subunits composed of two heptameric rings stacked back-to-back. Interacts with the co-chaperonin GroES.

It is found in the cytoplasm. It carries out the reaction ATP + H2O + a folded polypeptide = ADP + phosphate + an unfolded polypeptide.. In terms of biological role, together with its co-chaperonin GroES, plays an essential role in assisting protein folding. The GroEL-GroES system forms a nano-cage that allows encapsulation of the non-native substrate proteins and provides a physical environment optimized to promote and accelerate protein folding. In Desulfitobacterium hafniense (strain Y51), this protein is Chaperonin GroEL.